We begin with the raw amino-acid sequence, 986 residues long: Vacuolar membrane protease (986 aa).

The Cytoplasmic portion of the chain corresponds to 1–16; the sequence is MAPLRLSRANPLAFAR. Residues 17-37 traverse the membrane as a helical segment; that stretch reads WPVTLITAVVYLAFLIPLLIV. At 38-392 the chain is on the vacuolar side; sequence HHVVPSPPTA…TTFVLFELHT (355 aa). An N-linked (GlcNAc...) asparagine glycan is attached at Asn-121. Positions 176 and 188 each coordinate Zn(2+). Glu-222 serves as the catalytic Proton acceptor. Zn(2+) is bound by residues Glu-223, Glu-248, and His-321. A helical membrane pass occupies residues 393 to 413; it reads LFALSVTLLVVAPLALLVTGI. Topologically, residues 414 to 444 are cytoplasmic; sequence ALTRADKMYLFRTSAKADESLDSVPLQGLRG. The helical transmembrane segment at 445–465 threads the bilayer; it reads FFRFPFLFAIPTAVTVGLAYL. At 466–475 the chain is on the vacuolar side; sequence VTKVNPLIIH. A helical transmembrane segment spans residues 476-496; it reads SSEYAVWSMMLSAWTFLAWFV. The Cytoplasmic segment spans residues 497-510; sequence SRMADFARPTALHR. Residues 511–531 traverse the membrane as a helical segment; it reads IYTLTWMFVLAWVLLVISTVY. At 532-535 the chain is on the vacuolar side; the sequence is QNQR. Residues 536–556 traverse the membrane as a helical segment; it reads GLAGSYSVFFFFSGTFLATWI. The Cytoplasmic portion of the chain corresponds to 557–668; the sequence is SYLELFSLPR…SASLPTWTWT (112 aa). Residues 573–585 show a composition bias toward polar residues; it reads QNRPTSRRASSYG. The interval 573-622 is disordered; the sequence is QNRPTSRRASSYGGSRLGTASGEDHEEDDHDAEEEEEEQEPTESTSLLGG. Positions 596-613 are enriched in acidic residues; it reads DHEEDDHDAEEEEEEQEP. A helical membrane pass occupies residues 669–689; the sequence is LQFLLMAPLVLIMVGPLALLL. Topologically, residues 690–704 are vacuolar; the sequence is TSALHQTGQDGSSSL. Residues 705–725 traverse the membrane as a helical segment; it reads FIYVAIAALTTFLLTPLLPFI. Residues 726-732 lie on the Cytoplasmic side of the membrane; the sequence is HRHTYHL. The helical transmembrane segment at 733-753 threads the bilayer; that stretch reads PVFLLLVFLGTLIYNLVAFPF. Topologically, residues 754–986 are vacuolar; sequence SPTNRLKLFF…LVEGWKGFSI (233 aa). N-linked (GlcNAc...) asparagine glycans are attached at residues Asn-799, Asn-840, and Asn-948. The tract at residues 840–859 is disordered; the sequence is NTTDDKEGDEDTHHPRKARI.

This sequence belongs to the peptidase M28 family. Requires Zn(2+) as cofactor.

It is found in the vacuole membrane. Functionally, may be involved in vacuolar sorting and osmoregulation. This Aspergillus niger (strain ATCC MYA-4892 / CBS 513.88 / FGSC A1513) protein is Vacuolar membrane protease.